An 813-amino-acid chain; its full sequence is MSKTEHPASGASPETRAAALRATLNRYAHEYYVLDQPSVPDAEYDRLYRELEALEAEHPELRTPDSPTLRVGGAVLPEFAPVRHVVPMLSIRTETDTTAGGALDFDASVRRELGLAESDPPVEYAAELKFDGLAINLRYEKGFLVQAATRGDGATGEDVTQNIRTIRQIPLGLRPVGGAVPDVLEVRGEVYMRRDDFERLNARQRERGDKTFVNPRNTAAGAVRQLDPKMAAERPLSFFAYGLGEAAGWSGMPDTHSGMLDALVAYGFPVSKERAAVKGGEGLVQFHAAIGAKRDSLPFDIDGVVYKVNSLALQRELGFRTREPRWAVAHKYPAQEALTTVESIGVQVGRTGAITPVARLVPVFVGGVTVTNATLHNEDEVRRKDVRVGDTVIVRRAGDVIPEVVAVVLERRPMEDVPGSDLFNPTQQPKHPPFELPRSCPVCGSHVVREEGEAVARCSGGLFCSAQRKEAIRHFAGRRMMDIEGLGERYIDNLVELEYVHGIADLYRLTLDDFLEMKRRADERDGVTPETVAAGKIATKWAENLLDGIRASKTPPLARFLFAMGIRHVGESTAKTLADWLGSLAIVRRAPAPLLLTLPDVGATVAEAIADFFAEPKNQQALDALLTAGVAPQGEHPPSAKLRDQLEPAELYAALGVPKLTAIRSKQLATLVPSLAQLANVDTAQLEGLPADVAASLLAWLDADDHRTRLGTLDALRAELLAAMPAGAAEEGALSGKTVVLTGTLPTLSRDEAKAMLEAAGAKVSGSVSKKTDYVVAGVEAGSKLARAQELGVRVLDEAGMLALLQNPPGDSA.

NAD(+) is bound by residues 41-45, 90-91, and E127; these read DAEYD and SI. The N6-AMP-lysine intermediate role is filled by K129. The NAD(+) site is built by R150, E189, K307, and K331. Positions 440, 443, 458, and 464 each coordinate Zn(2+). In terms of domain architecture, BRCT spans 729 to 813; that stretch reads AEEGALSGKT…LLQNPPGDSA (85 aa).

The protein belongs to the NAD-dependent DNA ligase family. LigA subfamily. Mg(2+) serves as cofactor. The cofactor is Mn(2+).

The enzyme catalyses NAD(+) + (deoxyribonucleotide)n-3'-hydroxyl + 5'-phospho-(deoxyribonucleotide)m = (deoxyribonucleotide)n+m + AMP + beta-nicotinamide D-nucleotide.. Its function is as follows. DNA ligase that catalyzes the formation of phosphodiester linkages between 5'-phosphoryl and 3'-hydroxyl groups in double-stranded DNA using NAD as a coenzyme and as the energy source for the reaction. It is essential for DNA replication and repair of damaged DNA. In Ralstonia nicotianae (strain ATCC BAA-1114 / GMI1000) (Ralstonia solanacearum), this protein is DNA ligase.